Reading from the N-terminus, the 577-residue chain is Aspartate--tRNA(Asp/Asn) ligase (577 aa).

Residue glutamate 171 participates in L-aspartate binding. The tract at residues 195-198 (QLFK) is aspartate. Arginine 217 provides a ligand contact to L-aspartate. ATP is bound by residues 217-219 (RDE) and glutamine 226. Histidine 444 contributes to the L-aspartate binding site. Position 474 (glutamate 474) interacts with ATP. An L-aspartate-binding site is contributed by arginine 481. 526–529 (GFDR) provides a ligand contact to ATP.

The protein belongs to the class-II aminoacyl-tRNA synthetase family. Type 1 subfamily. As to quaternary structure, homodimer.

The protein localises to the cytoplasm. It carries out the reaction tRNA(Asx) + L-aspartate + ATP = L-aspartyl-tRNA(Asx) + AMP + diphosphate. Functionally, aspartyl-tRNA synthetase with relaxed tRNA specificity since it is able to aspartylate not only its cognate tRNA(Asp) but also tRNA(Asn). Reaction proceeds in two steps: L-aspartate is first activated by ATP to form Asp-AMP and then transferred to the acceptor end of tRNA(Asp/Asn). This is Aspartate--tRNA(Asp/Asn) ligase from Helicobacter pylori (strain P12).